The following is a 169-amino-acid chain: Ribosome maturation factor RimM (169 aa).

Residues Glu96–Glu166 enclose the PRC barrel domain.

The protein belongs to the RimM family. As to quaternary structure, binds ribosomal protein uS19.

The protein resides in the cytoplasm. In terms of biological role, an accessory protein needed during the final step in the assembly of 30S ribosomal subunit, possibly for assembly of the head region. Essential for efficient processing of 16S rRNA. May be needed both before and after RbfA during the maturation of 16S rRNA. It has affinity for free ribosomal 30S subunits but not for 70S ribosomes. The chain is Ribosome maturation factor RimM from Acidiphilium cryptum (strain JF-5).